A 439-amino-acid polypeptide reads, in one-letter code: Cell division protein DivIB (439 aa).

Disordered stretches follow at residues 1–96 and 119–149; these read MDDK…DSNI and DNEQ…KSKV. Over 1–173 the chain is Cytoplasmic; that stretch reads MDDKTKNDQQ…RRKRQKRIQY (173 aa). Over residues 11 to 20 the composition is skewed to acidic residues; the sequence is ESNEDKDELE. Positions 26–38 are enriched in basic residues; that stretch reads TSKKRRQRKRSKA. Over residues 64-76 the composition is skewed to basic and acidic residues; sequence KDFKKEESNDKNN. Positions 77 to 86 are enriched in low complexity; that stretch reads DSASSHANDN. Over residues 87–96 the composition is skewed to acidic residues; sequence NIDDSTDSNI. Residues 119-133 show a composition bias toward polar residues; the sequence is DNEQPQSAPKEQNSD. The helical transmembrane segment at 174–194 threads the bilayer; the sequence is SVITILVLLIAVILIYMFSPL. Residues 195–263 form the POTRA domain; the sequence is SKIAHVNING…NTLNVDITEN (69 aa). The Extracellular segment spans residues 195 to 439; the sequence is SKIAHVNING…KINKQSSKNN (245 aa). Residues 396 to 439 are disordered; it reads YRGNTSSQSESDKNVTKSSQEENQAKEELQSVLNKINKQSSKNN. The segment covering 405-424 has biased composition (basic and acidic residues); that stretch reads ESDKNVTKSSQEENQAKEEL. The segment covering 426–439 has biased composition (polar residues); that stretch reads SVLNKINKQSSKNN.

The protein belongs to the FtsQ/DivIB family. DivIB subfamily.

It localises to the cell membrane. Its function is as follows. Cell division protein that may be involved in stabilizing or promoting the assembly of the division complex. This chain is Cell division protein DivIB, found in Staphylococcus aureus (strain NCTC 8325 / PS 47).